A 113-amino-acid chain; its full sequence is Sensorin-A (113 aa).

Residues 1 to 32 form the signal peptide; that stretch reads MPSRAATSPLNVQMMVVLCIVCLALQAVAANA. A Phenylalanine amide modification is found at phenylalanine 54. The propeptide occupies 58–113; sequence SSSETYSTNLINLLSRQLVSQEELRAILEKQPILLDEVVKILDRNDDGYITVADLL. The EF-hand domain occupies 87–113; the sequence is KQPILLDEVVKILDRNDDGYITVADLL. Aspartate 100, asparagine 102, aspartate 104, tyrosine 106, and aspartate 111 together coordinate Ca(2+).

In terms of tissue distribution, seems to be specific to the mechanosensory neurons of the central nervous system.

It localises to the secreted. May function as an inhibitory cotransmitter acting in conjunction with the fast excitatory transmitter released by sensory neurons. The peptide selectively inhibits certain postsynaptic cells probably by means of sensorin A release. This Aplysia californica (California sea hare) protein is Sensorin-A (PSC1).